A 249-amino-acid chain; its full sequence is ATP synthase subunit a 1 (249 aa).

The next 6 helical transmembrane spans lie at 26 to 46, 84 to 104, 114 to 134, 143 to 163, 193 to 213, and 216 to 236; these read FTNV…FLYL, FFPF…LGLF, IIVT…YGFF, LFVP…IEII, FVVS…LPLI, and VAIT…FTVL.

Belongs to the ATPase A chain family. As to quaternary structure, F-type ATPases have 2 components, CF(1) - the catalytic core - and CF(0) - the membrane proton channel. CF(1) has five subunits: alpha(3), beta(3), gamma(1), delta(1), epsilon(1). CF(0) has three main subunits: a(1), b(2) and c(9-12). The alpha and beta chains form an alternating ring which encloses part of the gamma chain. CF(1) is attached to CF(0) by a central stalk formed by the gamma and epsilon chains, while a peripheral stalk is formed by the delta and b chains.

It is found in the cell inner membrane. Key component of the proton channel; it plays a direct role in the translocation of protons across the membrane. This is ATP synthase subunit a 1 from Brucella anthropi (strain ATCC 49188 / DSM 6882 / CCUG 24695 / JCM 21032 / LMG 3331 / NBRC 15819 / NCTC 12168 / Alc 37) (Ochrobactrum anthropi).